A 458-amino-acid chain; its full sequence is Sulfite exporter TauE/SafE family protein 2 (458 aa).

Transmembrane regions (helical) follow at residues 5 to 25 (FVPI…EQEP), 53 to 73 (IELT…SSIS), 74 to 94 (SAGG…VAGL), 101 to 121 (SFSA…NLFV), 128 to 148 (GKTL…LLGV), 150 to 170 (IGVI…FAVF), 227 to 247 (FPWI…AVYL), 267 to 287 (YWLI…WICF), 324 to 344 (VMAL…GMLI), 348 to 368 (LLQV…MVLF), 386 to 406 (GTAS…LKVV), and 418 to 438 (IIVF…TSYG).

The protein belongs to the 4-toluene sulfonate uptake permease (TSUP) (TC 2.A.102) family.

The protein localises to the membrane. This chain is Sulfite exporter TauE/SafE family protein 2, found in Arabidopsis thaliana (Mouse-ear cress).